The primary structure comprises 165 residues: Xanthine-guanine phosphoribosyltransferase (165 aa).

Residues 41–42 (RG) and 98–106 (DDLTDTGKT) contribute to the 5-phospho-alpha-D-ribose 1-diphosphate site. Asp-99 serves as a coordination point for Mg(2+). Residues Asp-102 and Ile-145 each coordinate guanine. Xanthine contacts are provided by Asp-102 and Ile-145. GMP contacts are provided by residues 102 to 106 (DTGKT) and 144 to 145 (WI).

Belongs to the purine/pyrimidine phosphoribosyltransferase family. XGPT subfamily. As to quaternary structure, homotetramer. Requires Mg(2+) as cofactor.

It localises to the cell inner membrane. It catalyses the reaction GMP + diphosphate = guanine + 5-phospho-alpha-D-ribose 1-diphosphate. The catalysed reaction is XMP + diphosphate = xanthine + 5-phospho-alpha-D-ribose 1-diphosphate. The enzyme catalyses IMP + diphosphate = hypoxanthine + 5-phospho-alpha-D-ribose 1-diphosphate. It participates in purine metabolism; GMP biosynthesis via salvage pathway; GMP from guanine: step 1/1. Its pathway is purine metabolism; XMP biosynthesis via salvage pathway; XMP from xanthine: step 1/1. Its function is as follows. Purine salvage pathway enzyme that catalyzes the transfer of the ribosyl-5-phosphate group from 5-phospho-alpha-D-ribose 1-diphosphate (PRPP) to the N9 position of the 6-oxopurines guanine and xanthine to form the corresponding ribonucleotides GMP (guanosine 5'-monophosphate) and XMP (xanthosine 5'-monophosphate), with the release of PPi. To a lesser extent, also acts on hypoxanthine. This Sinorhizobium medicae (strain WSM419) (Ensifer medicae) protein is Xanthine-guanine phosphoribosyltransferase.